The primary structure comprises 184 residues: UPF0301 protein Rsph17029_2659 (184 aa).

The protein belongs to the UPF0301 (AlgH) family.

The chain is UPF0301 protein Rsph17029_2659 from Cereibacter sphaeroides (strain ATCC 17029 / ATH 2.4.9) (Rhodobacter sphaeroides).